Reading from the N-terminus, the 256-residue chain is 6-carboxyhexanoate--CoA ligase (256 aa).

The protein belongs to the BioW family. As to quaternary structure, homodimer. Mg(2+) serves as cofactor.

The catalysed reaction is heptanedioate + ATP + CoA = 6-carboxyhexanoyl-CoA + AMP + diphosphate. It functions in the pathway metabolic intermediate metabolism; pimeloyl-CoA biosynthesis; pimeloyl-CoA from pimelate: step 1/1. Functionally, catalyzes the transformation of pimelate into pimeloyl-CoA with concomitant hydrolysis of ATP to AMP. In Methanobrevibacter ruminantium (strain ATCC 35063 / DSM 1093 / JCM 13430 / OCM 146 / M1) (Methanobacterium ruminantium), this protein is 6-carboxyhexanoate--CoA ligase.